The sequence spans 156 residues: Small ribosomal subunit protein uS7 (156 aa).

The protein belongs to the universal ribosomal protein uS7 family. In terms of assembly, part of the 30S ribosomal subunit. Contacts proteins S9 and S11.

One of the primary rRNA binding proteins, it binds directly to 16S rRNA where it nucleates assembly of the head domain of the 30S subunit. Is located at the subunit interface close to the decoding center, probably blocks exit of the E-site tRNA. In Citrobacter koseri (strain ATCC BAA-895 / CDC 4225-83 / SGSC4696), this protein is Small ribosomal subunit protein uS7.